Here is a 130-residue protein sequence, read N- to C-terminus: Keratin, high-sulfur matrix protein, IIIA3A (130 aa).

In terms of tissue distribution, wool.

Its function is as follows. The keratin products of mammalian epidermal derivatives such as wool and hair consist of microfibrils embedded in a rigid matrix of other proteins. The matrix proteins include the high-sulfur and high-tyrosine keratins, having molecular weights of 6-20 kDa, whereas the microfibrils contain the larger, low-sulfur keratins (40-56 kDa). This Ovis aries (Sheep) protein is Keratin, high-sulfur matrix protein, IIIA3A.